The chain runs to 119 residues: Immunoglobulin heavy variable 2-70 (119 aa).

An N-terminal signal peptide occupies residues 1 to 19 (MDILCSTLLLLTVPSWVLS). At Gln-20 the chain carries Pyrrolidone carboxylic acid. The tract at residues 20–44 (QVTLRESGPALVKPTQTLTLTCTFS) is framework-1. The Ig-like domain maps to 20-119 (QVTLRESGPA…DTATYYCARI (100 aa)). A disulfide bond links Cys-41 and Cys-116. The interval 45–54 (GFSLSTSGMC) is complementarity-determining-1. Residues 55–71 (VSWIRQPPGKALEWLAL) form a framework-2 region. The segment at 72–78 (IDWDDDK) is complementarity-determining-2. A framework-3 region spans residues 79 to 116 (YYSTSLKTRLTISKDTSKNQVVLTMTNMDPVDTATYYC). The interval 117–119 (ARI) is complementarity-determining-3.

As to quaternary structure, immunoglobulins are composed of two identical heavy chains and two identical light chains; disulfide-linked.

It localises to the secreted. Its subcellular location is the cell membrane. V region of the variable domain of immunoglobulin heavy chains that participates in the antigen recognition. Immunoglobulins, also known as antibodies, are membrane-bound or secreted glycoproteins produced by B lymphocytes. In the recognition phase of humoral immunity, the membrane-bound immunoglobulins serve as receptors which, upon binding of a specific antigen, trigger the clonal expansion and differentiation of B lymphocytes into immunoglobulins-secreting plasma cells. Secreted immunoglobulins mediate the effector phase of humoral immunity, which results in the elimination of bound antigens. The antigen binding site is formed by the variable domain of one heavy chain, together with that of its associated light chain. Thus, each immunoglobulin has two antigen binding sites with remarkable affinity for a particular antigen. The variable domains are assembled by a process called V-(D)-J rearrangement and can then be subjected to somatic hypermutations which, after exposure to antigen and selection, allow affinity maturation for a particular antigen. The polypeptide is Immunoglobulin heavy variable 2-70 (Homo sapiens (Human)).